The primary structure comprises 609 residues: ATP-dependent lipid A-core flippase (609 aa).

A run of 6 helical transmembrane segments spans residues 47 to 67, 88 to 108, 167 to 187, 190 to 210, 279 to 299, and 305 to 325; these read LLAA…IYLI, ILML…VGSF, AIIT…VMFV, WQLS…ISII, VIQI…AIFG, and GSSW…AAIL. The ABC transmembrane type-1 domain maps to 47–340; that stretch reads LLAAIGSIFF…LTKVNVVIQK (294 aa). One can recognise an ABC transporter domain in the interval 372 to 606; sequence VTIKDLSFAF…GGLYTRLYQS (235 aa). 404–411 serves as a coordination point for ATP; it reads GKSGSGKT.

This sequence belongs to the ABC transporter superfamily. Lipid exporter (TC 3.A.1.106) family. In terms of assembly, homodimer.

The protein resides in the cell inner membrane. It catalyses the reaction ATP + H2O + lipid A-core oligosaccharideSide 1 = ADP + phosphate + lipid A-core oligosaccharideSide 2.. Its function is as follows. Involved in lipopolysaccharide (LPS) biosynthesis. Translocates lipid A-core from the inner to the outer leaflet of the inner membrane. Transmembrane domains (TMD) form a pore in the inner membrane and the ATP-binding domain (NBD) is responsible for energy generation. The sequence is that of ATP-dependent lipid A-core flippase from Francisella tularensis subsp. holarctica (strain LVS).